A 206-amino-acid polypeptide reads, in one-letter code: Large ribosomal subunit protein uL13x (206 aa).

Belongs to the universal ribosomal protein uL13 family.

In Arabidopsis thaliana (Mouse-ear cress), this protein is Large ribosomal subunit protein uL13x (RPL13AC).